The sequence spans 431 residues: Glutamyl-tRNA reductase (431 aa).

Substrate-binding positions include Thr-49–Arg-52, Ser-109, Glu-114–Gln-116, and Gln-120. The active-site Nucleophile is Cys-50. Gly-189 to Ser-194 lines the NADP(+) pocket.

Belongs to the glutamyl-tRNA reductase family. Homodimer.

The catalysed reaction is (S)-4-amino-5-oxopentanoate + tRNA(Glu) + NADP(+) = L-glutamyl-tRNA(Glu) + NADPH + H(+). Its pathway is porphyrin-containing compound metabolism; protoporphyrin-IX biosynthesis; 5-aminolevulinate from L-glutamyl-tRNA(Glu): step 1/2. It participates in porphyrin-containing compound metabolism; chlorophyll biosynthesis. In terms of biological role, catalyzes the NADPH-dependent reduction of glutamyl-tRNA(Glu) to glutamate 1-semialdehyde (GSA). The sequence is that of Glutamyl-tRNA reductase from Trichodesmium erythraeum (strain IMS101).